The chain runs to 439 residues: UDP-N-acetylmuramoylalanine--D-glutamate ligase (439 aa).

112–118 is an ATP binding site; sequence GSNGKST.

Belongs to the MurCDEF family.

The protein resides in the cytoplasm. The catalysed reaction is UDP-N-acetyl-alpha-D-muramoyl-L-alanine + D-glutamate + ATP = UDP-N-acetyl-alpha-D-muramoyl-L-alanyl-D-glutamate + ADP + phosphate + H(+). It participates in cell wall biogenesis; peptidoglycan biosynthesis. In terms of biological role, cell wall formation. Catalyzes the addition of glutamate to the nucleotide precursor UDP-N-acetylmuramoyl-L-alanine (UMA). This Mannheimia succiniciproducens (strain KCTC 0769BP / MBEL55E) protein is UDP-N-acetylmuramoylalanine--D-glutamate ligase.